A 223-amino-acid chain; its full sequence is Small ribosomal subunit protein uS3 (223 aa).

The 79-residue stretch at 39–117 folds into the KH type-2 domain; it reads IREHLRKKPS…RPELNAKLVA (79 aa).

The protein belongs to the universal ribosomal protein uS3 family. As to quaternary structure, part of the 30S ribosomal subunit. Forms a tight complex with proteins S10 and S14.

In terms of biological role, binds the lower part of the 30S subunit head. Binds mRNA in the 70S ribosome, positioning it for translation. The protein is Small ribosomal subunit protein uS3 of Chlamydia felis (strain Fe/C-56) (Chlamydophila felis).